We begin with the raw amino-acid sequence, 177 residues long: Transcription termination/antitermination protein NusG (177 aa).

The KOW domain occupies 126–156 (PGETVRVIDGPFADFNGVVEEVNYEKSRIQV).

It belongs to the NusG family.

Functionally, participates in transcription elongation, termination and antitermination. This Pseudomonas aeruginosa (strain ATCC 15692 / DSM 22644 / CIP 104116 / JCM 14847 / LMG 12228 / 1C / PRS 101 / PAO1) protein is Transcription termination/antitermination protein NusG.